The sequence spans 188 residues: Inosine triphosphate pyrophosphatase (188 aa).

Residue 12 to 17 (TGNANK) coordinates ITP. A Mg(2+)-binding site is contributed by glutamate 40. Residues lysine 52, 68–69 (DT), lysine 85, 144–147 (FGWD), lysine 165, and 170–171 (HR) each bind ITP.

It belongs to the HAM1 NTPase family. In terms of assembly, homodimer. Mg(2+) serves as cofactor. The cofactor is Mn(2+).

The protein localises to the cytoplasm. Its subcellular location is the nucleus. It carries out the reaction ITP + H2O = IMP + diphosphate + H(+). The enzyme catalyses dITP + H2O = dIMP + diphosphate + H(+). The catalysed reaction is XTP + H2O = XMP + diphosphate + H(+). Its function is as follows. Pyrophosphatase that hydrolyzes non-canonical purine nucleotides such as inosine triphosphate (ITP), deoxyinosine triphosphate (dITP) or xanthosine 5'-triphosphate (XTP) to their respective monophosphate derivatives. The enzyme does not distinguish between the deoxy- and ribose forms. Probably excludes non-canonical purines from RNA and DNA precursor pools, thus preventing their incorporation into RNA and DNA and avoiding chromosomal lesions. The polypeptide is Inosine triphosphate pyrophosphatase (Podospora anserina (strain S / ATCC MYA-4624 / DSM 980 / FGSC 10383) (Pleurage anserina)).